The chain runs to 267 residues: Diphthine--ammonia ligase (267 aa).

A Phosphotyrosine modification is found at Tyr97.

It belongs to the Diphthine--ammonia ligase family.

The catalysed reaction is diphthine-[translation elongation factor 2] + NH4(+) + ATP = diphthamide-[translation elongation factor 2] + AMP + diphosphate + H(+). The protein operates within protein modification; peptidyl-diphthamide biosynthesis. Amidase that may catalyze the last step of diphthamide biosynthesis using ammonium and ATP. Diphthamide biosynthesis consists in the conversion of an L-histidine residue in the translation elongation factor (EEF2) to diphthamide. This Homo sapiens (Human) protein is Diphthine--ammonia ligase.